The chain runs to 538 residues: Glutamyl-tRNA(Gln) amidotransferase subunit B, mitochondrial (538 aa).

This sequence belongs to the GatB/GatE family. GatB subfamily. As to quaternary structure, subunit of the heterotrimeric GatCAB amidotransferase (AdT) complex, composed of A, B and C subunits.

It localises to the mitochondrion. It carries out the reaction L-glutamyl-tRNA(Gln) + L-glutamine + ATP + H2O = L-glutaminyl-tRNA(Gln) + L-glutamate + ADP + phosphate + H(+). In terms of biological role, allows the formation of correctly charged Gln-tRNA(Gln) through the transamidation of misacylated Glu-tRNA(Gln) in the mitochondria. The reaction takes place in the presence of glutamine and ATP through an activated gamma-phospho-Glu-tRNA(Gln). The polypeptide is Glutamyl-tRNA(Gln) amidotransferase subunit B, mitochondrial (Dictyostelium discoideum (Social amoeba)).